The sequence spans 282 residues: Pantothenate synthetase (282 aa).

30–37 contacts ATP; it reads MGALHAGH. The active-site Proton donor is the His37. Gln61 is a binding site for (R)-pantoate. Gln61 provides a ligand contact to beta-alanine. Residue 147-150 coordinates ATP; sequence GEKD. Gln153 provides a ligand contact to (R)-pantoate. ATP is bound by residues Val176 and 184–187; that span reads LSSR.

Belongs to the pantothenate synthetase family. Homodimer.

Its subcellular location is the cytoplasm. It catalyses the reaction (R)-pantoate + beta-alanine + ATP = (R)-pantothenate + AMP + diphosphate + H(+). Its pathway is cofactor biosynthesis; (R)-pantothenate biosynthesis; (R)-pantothenate from (R)-pantoate and beta-alanine: step 1/1. Its function is as follows. Catalyzes the condensation of pantoate with beta-alanine in an ATP-dependent reaction via a pantoyl-adenylate intermediate. The polypeptide is Pantothenate synthetase (Bacteroides fragilis (strain ATCC 25285 / DSM 2151 / CCUG 4856 / JCM 11019 / LMG 10263 / NCTC 9343 / Onslow / VPI 2553 / EN-2)).